The primary structure comprises 277 residues: Ethanolamine ammonia-lyase small subunit (277 aa).

Val-164, Glu-185, and Cys-214 together coordinate adenosylcob(III)alamin.

The protein belongs to the EutC family. As to quaternary structure, the basic unit is a heterodimer which dimerizes to form tetramers. The heterotetramers trimerize; 6 large subunits form a core ring with 6 small subunits projecting outwards. Requires adenosylcob(III)alamin as cofactor.

The protein localises to the bacterial microcompartment. The catalysed reaction is ethanolamine = acetaldehyde + NH4(+). The protein operates within amine and polyamine degradation; ethanolamine degradation. Functionally, catalyzes the deamination of various vicinal amino-alcohols to oxo compounds. Allows this organism to utilize ethanolamine as the sole source of nitrogen and carbon in the presence of external vitamin B12. This is Ethanolamine ammonia-lyase small subunit from Pseudomonas fluorescens (strain SBW25).